Consider the following 147-residue polypeptide: Hemoglobin subunit delta (147 aa).

In terms of domain architecture, Globin spans 3–147; it reads NLTAAEKTQV…VANALAHKYH (145 aa). Heme b-binding residues include H64 and H93.

Belongs to the globin family. In terms of assembly, heterotetramer of two delta chains and two alpha chains. Red blood cells.

This Loxodonta africana (African elephant) protein is Hemoglobin subunit delta (HBD).